A 430-amino-acid polypeptide reads, in one-letter code: Enolase (430 aa).

Gln-167 serves as a coordination point for (2R)-2-phosphoglycerate. The active-site Proton donor is Glu-209. Positions 245, 286, and 313 each coordinate Mg(2+). (2R)-2-phosphoglycerate contacts are provided by Lys-338, Arg-367, Ser-368, and Lys-389. Lys-338 serves as the catalytic Proton acceptor.

This sequence belongs to the enolase family. Requires Mg(2+) as cofactor.

The protein resides in the cytoplasm. It localises to the secreted. Its subcellular location is the cell surface. It catalyses the reaction (2R)-2-phosphoglycerate = phosphoenolpyruvate + H2O. Its pathway is carbohydrate degradation; glycolysis; pyruvate from D-glyceraldehyde 3-phosphate: step 4/5. In terms of biological role, catalyzes the reversible conversion of 2-phosphoglycerate (2-PG) into phosphoenolpyruvate (PEP). It is essential for the degradation of carbohydrates via glycolysis. The chain is Enolase from Synechococcus sp. (strain CC9902).